The chain runs to 1746 residues: Inactive tyrosine-protein kinase PEAK1 (1746 aa).

The interval 44–66 (KTNANHSNNHRIRNTGNFRPPVA) is disordered. Ser-281 bears the Phosphoserine mark. Disordered regions lie at residues 334–411 (QSMV…KVPE) and 489–517 (LEGP…LTPG). Over residues 338 to 349 (SSDSTSPDSSLT) the composition is skewed to low complexity. A compositionally biased stretch (polar residues) spans 355 to 364 (ETASSLSQKI). The segment covering 492–513 (PVNSPKTKSSSSTPNSPVTSSS) has biased composition (low complexity). Residues Ser-540, Ser-572, and Ser-587 each carry the phosphoserine modification. The tract at residues 551–577 (ITSGTGPNVPPRKNCHKSAPTSPTATN) is disordered. Phosphotyrosine is present on residues Tyr-635 and Tyr-641. Ser-648 carries the post-translational modification Phosphoserine. Tyr-665 carries the post-translational modification Phosphotyrosine. Disordered stretches follow at residues 671–700 (ESKV…HKRG), 713–764 (LNRG…EKAS), 802–920 (DADV…AADA), 1052–1102 (VTED…DPNP), and 1138–1158 (GKTD…LPKK). A compositionally biased stretch (polar residues) spans 675 to 694 (PDNTTSKTTDCLQTKGFSNS). Positions 718–730 (SSPQRSYSSSHSS) are enriched in low complexity. 2 stretches are compositionally biased toward polar residues: residues 748–758 (TQESQMVGSSS) and 820–841 (LFTS…PTTK). Ser-826 and Ser-854 each carry phosphoserine. Positions 864–874 (SEPPAPFPPPR) are enriched in pro residues. The segment covering 889 to 902 (HFTNWTKPTSPTRS) has biased composition (polar residues). Residue Ser-898 is modified to Phosphoserine. 3 stretches are compositionally biased toward basic and acidic residues: residues 903–920 (TEAE…AADA), 1052–1062 (VTEDFSPRDPR), and 1084–1094 (ELEREDGKEDI). Position 1151 is a phosphothreonine (Thr-1151). At Tyr-1188 the chain carries Phosphotyrosine. A required for homodimerization region spans residues 1285 to 1311 (EVVGKIRSLHTDALKKLAVKCEDLFMA). A Protein kinase domain is found at 1313 to 1675 (QKDQLRFGVD…LLWGPREDLF (363 aa)). Ser-1374 is modified (phosphoserine). The tract at residues 1402 to 1456 (LLPWEDPDDPEKDEDDMEETEEDAKGETDGKNPKPCSEAASSQKENQGVMSKKQR) is disordered. A compositionally biased stretch (acidic residues) spans 1406–1423 (EDPDDPEKDEDDMEETEE). Basic and acidic residues predominate over residues 1424-1433 (DAKGETDGKN). A compositionally biased stretch (polar residues) spans 1440–1450 (AASSQKENQGV). A required for homodimerization region spans residues 1670-1743 (PREDLFQTFT…DSLSCIVKIL (74 aa)).

It belongs to the protein kinase superfamily. As to quaternary structure, homodimer. Interacts with BCAR1 and CRK. Interacts with PRAG1. Interacts (when phosphorylated at Tyr-1188) with SHC1 (via PID domain). Found in a complex with PPP1CA, PPP1CC, SHC1 and PEAK1. Interacts (when phosphorylated at Tyr-635) with tensin TNS3 (when phosphorylated on the SH2 domain); TNS3 also interacts with integrins ITGB1, ITGB3 and ITGB5 and mediates their association with PEAK1. Interacts with RASAL2 and GRB2. Phosphorylated on tyrosine in a CSK-dependent manner in response to adhesion to fibronectin and to EGF stimulation. Phosphorylation at Tyr-665 by a Src family kinase controls subcellular localization to focal adhesion and focal adhesion dynamics. Phosphorylation at Tyr-1188 is essential for binding to SHC1. Phosphorylation at Tyr-635 promotes interaction with tensin TNS3.

It localises to the cytoplasm. The protein localises to the cytoskeleton. Its subcellular location is the cell junction. The protein resides in the focal adhesion. Its function is as follows. Probable catalytically inactive kinase. Scaffolding protein that regulates the cytoskeleton to control cell spreading and migration by modulating focal adhesion dynamics. Acts as a scaffold for mediating EGFR signaling. This is Inactive tyrosine-protein kinase PEAK1 (PEAK1) from Homo sapiens (Human).